The following is a 202-amino-acid chain: Glycerol-3-phosphate acyltransferase (202 aa).

The next 5 helical transmembrane spans lie at 3–23, 87–107, 118–138, 144–164, and 167–187; these read NLII…LILA, LLWS…YLLF, GAMI…WVVI, ISSL…FIFN, and LEIH…YKHL.

It belongs to the PlsY family. Probably interacts with PlsX.

The protein resides in the cell inner membrane. It catalyses the reaction an acyl phosphate + sn-glycerol 3-phosphate = a 1-acyl-sn-glycero-3-phosphate + phosphate. Its pathway is lipid metabolism; phospholipid metabolism. Functionally, catalyzes the transfer of an acyl group from acyl-phosphate (acyl-PO(4)) to glycerol-3-phosphate (G3P) to form lysophosphatidic acid (LPA). This enzyme utilizes acyl-phosphate as fatty acyl donor, but not acyl-CoA or acyl-ACP. The sequence is that of Glycerol-3-phosphate acyltransferase from Campylobacter jejuni subsp. jejuni serotype O:2 (strain ATCC 700819 / NCTC 11168).